The chain runs to 256 residues: Acetoacetate decarboxylase 3 (256 aa).

Catalysis depends on Lys110, which acts as the Schiff-base intermediate with acetoacetate.

This sequence belongs to the ADC family.

It carries out the reaction acetoacetate + H(+) = acetone + CO2. Functionally, catalyzes the conversion of acetoacetate to acetone and carbon dioxide. The sequence is that of Acetoacetate decarboxylase 3 from Mesorhizobium japonicum (strain LMG 29417 / CECT 9101 / MAFF 303099) (Mesorhizobium loti (strain MAFF 303099)).